The sequence spans 102 residues: Small ribosomal subunit protein uS10 (102 aa).

This sequence belongs to the universal ribosomal protein uS10 family. As to quaternary structure, part of the 30S ribosomal subunit.

Its function is as follows. Involved in the binding of tRNA to the ribosomes. The chain is Small ribosomal subunit protein uS10 from Bacillus cereus (strain G9842).